A 209-amino-acid polypeptide reads, in one-letter code: Na(+)-translocating NADH-quinone reductase subunit D (209 aa).

5 consecutive transmembrane segments (helical) span residues 42 to 62 (LVMT…ISLI), 66 to 86 (IPNS…VIVV), 103 to 123 (VFVG…AYAM), 131 to 151 (FMDG…VGFV), and 178 to 198 (NGLF…IWGL).

This sequence belongs to the NqrDE/RnfAE family. Composed of six subunits; NqrA, NqrB, NqrC, NqrD, NqrE and NqrF.

It localises to the cell inner membrane. The enzyme catalyses a ubiquinone + n Na(+)(in) + NADH + H(+) = a ubiquinol + n Na(+)(out) + NAD(+). Its function is as follows. NQR complex catalyzes the reduction of ubiquinone-1 to ubiquinol by two successive reactions, coupled with the transport of Na(+) ions from the cytoplasm to the periplasm. NqrA to NqrE are probably involved in the second step, the conversion of ubisemiquinone to ubiquinol. This chain is Na(+)-translocating NADH-quinone reductase subunit D, found in Yersinia pseudotuberculosis serotype O:1b (strain IP 31758).